The primary structure comprises 920 residues: Probable helicase HelY (920 aa).

Residues 26–184 (CAALERGHGV…WVQTVRGDTT (159 aa)) form the Helicase ATP-binding domain. 39 to 46 (APTGAGKT) contacts ATP. A DEVH box motif is present at residues 132 to 135 (DEVH). Positions 265–469 (EVIAILDAEG…SYNMTINLVH (205 aa)) constitute a Helicase C-terminal domain.

Belongs to the helicase family. SKI2 subfamily.

This Mycobacterium leprae (strain TN) protein is Probable helicase HelY (helY).